The primary structure comprises 406 residues: Cysteine desulfurase (406 aa).

Residue Lys-226 is modified to N6-(pyridoxal phosphate)lysine. Cys-364 functions as the Cysteine persulfide intermediate in the catalytic mechanism.

It belongs to the class-V pyridoxal-phosphate-dependent aminotransferase family. Csd subfamily. Homodimer. Interacts with SufE and the SufBCD complex composed of SufB, SufC and SufD. The interaction with SufE is required to mediate the direct transfer of the sulfur atom from the S-sulfanylcysteine. Requires pyridoxal 5'-phosphate as cofactor.

It is found in the cytoplasm. The catalysed reaction is (sulfur carrier)-H + L-cysteine = (sulfur carrier)-SH + L-alanine. The enzyme catalyses L-selenocysteine + AH2 = hydrogenselenide + L-alanine + A + H(+). The protein operates within cofactor biosynthesis; iron-sulfur cluster biosynthesis. Its function is as follows. Cysteine desulfurases mobilize the sulfur from L-cysteine to yield L-alanine, an essential step in sulfur metabolism for biosynthesis of a variety of sulfur-containing biomolecules. Component of the suf operon, which is activated and required under specific conditions such as oxidative stress and iron limitation. Acts as a potent selenocysteine lyase in vitro, that mobilizes selenium from L-selenocysteine. Selenocysteine lyase activity is however unsure in vivo. The polypeptide is Cysteine desulfurase (Serratia proteamaculans (strain 568)).